A 138-amino-acid chain; its full sequence is MIVGIGNDLVEIQRLTNMLNKGHGQRFLERCFTQQEQQLCNGRSTPQRACCYAKRFAAKEAVIKALGVGFRQGLWFTDIEVLPNQLGRPTVTLHGATAQWLACHHPGQVNIHLSLSDEKGLAIATALIECHPLAMAPS.

Mg(2+) is bound by residues aspartate 8 and glutamate 60.

The protein belongs to the P-Pant transferase superfamily. AcpS family. Mg(2+) is required as a cofactor.

It localises to the cytoplasm. It carries out the reaction apo-[ACP] + CoA = holo-[ACP] + adenosine 3',5'-bisphosphate + H(+). Functionally, transfers the 4'-phosphopantetheine moiety from coenzyme A to a Ser of acyl-carrier-protein. This is Holo-[acyl-carrier-protein] synthase from Magnetococcus marinus (strain ATCC BAA-1437 / JCM 17883 / MC-1).